Here is a 282-residue protein sequence, read N- to C-terminus: Bifunctional protein FolD (282 aa).

NADP(+)-binding positions include 166–168 (GRS) and S191.

It belongs to the tetrahydrofolate dehydrogenase/cyclohydrolase family. As to quaternary structure, homodimer.

It carries out the reaction (6R)-5,10-methylene-5,6,7,8-tetrahydrofolate + NADP(+) = (6R)-5,10-methenyltetrahydrofolate + NADPH. The enzyme catalyses (6R)-5,10-methenyltetrahydrofolate + H2O = (6R)-10-formyltetrahydrofolate + H(+). It functions in the pathway one-carbon metabolism; tetrahydrofolate interconversion. Its function is as follows. Catalyzes the oxidation of 5,10-methylenetetrahydrofolate to 5,10-methenyltetrahydrofolate and then the hydrolysis of 5,10-methenyltetrahydrofolate to 10-formyltetrahydrofolate. The chain is Bifunctional protein FolD from Acidovorax sp. (strain JS42).